The chain runs to 683 residues: Acetyl-coenzyme A synthetase 2 (683 aa).

CoA contacts are provided by residues 206-209 (RGGK) and Thr-325. Residues 401–403 (GEP) and 425–430 (DTMWQT) each bind ATP. Residue 425 to 430 (DTMWQT) coordinates AMP. Residue Lys-506 forms a Glycyl lysine isopeptide (Lys-Gly) (interchain with G-Cter in ubiquitin) linkage. The ATP site is built by Asp-516 and Arg-531. AMP is bound by residues Asp-516 and Arg-531. Ser-539 provides a ligand contact to CoA. Arg-542 is a binding site for ATP. A CoA-binding site is contributed by Arg-612. Phosphoserine is present on Ser-679.

This sequence belongs to the ATP-dependent AMP-binding enzyme family.

The protein resides in the cytoplasm. Its subcellular location is the nucleus. The catalysed reaction is acetate + ATP + CoA = acetyl-CoA + AMP + diphosphate. Its pathway is carbohydrate metabolism; pyruvate metabolism. Its function is as follows. Catalyzes the production of acetyl-CoA. Provides the acetyl-CoA source for histone acetylation in the nucleus. 'Anaerobic' isozyme of acetyl-coenzyme A synthetase, which is required for growth on fermentable carbon sources such as glucose. May be involved in the PDH (pyruvate dehydrogenase complex) bypass. The sequence is that of Acetyl-coenzyme A synthetase 2 from Saccharomyces cerevisiae (strain ATCC 204508 / S288c) (Baker's yeast).